A 493-amino-acid chain; its full sequence is Dipeptidase 3 (493 aa).

The signal sequence occupies residues 1-35 (MQPAGLEGPRALGLRPLGHRLSLLGVLLLVPSLWV). Residues 41 to 60 (TPSPSSAPTTPEASNATTAP) show a composition bias toward low complexity. A disordered region spans residues 41–74 (TPSPSSAPTTPEASNATTAPGIPNDTATSGVTSD). Disulfide bonds link C143–C222 and C294–C326. N331 is a glycosylation site (N-linked (GlcNAc...) asparagine). S462 carries the GPI-anchor amidated serine lipid modification. The propeptide at 463–493 (KAPPHPLPGLMATLTSLALILWLCCSGHRAV) is removed in mature form.

This sequence belongs to the metallo-dependent hydrolases superfamily. Peptidase M19 family. Homodimer; disulfide-linked. Interacts with TEX101; co-localized on the cell surface of spermatocytes, spermatids, and testicular spermatozoa, co-localized only in cytoplasmic droplets of caput and corpus epididymal sperm. In terms of tissue distribution, expressed in testis but not ovary.

Its subcellular location is the membrane. Functionally, lacks dipeptidase activity and is unable to hydrolyze cystinyl-bis-glycine. The absence of activity may be due to the inability of serine (instead of aspartate found in DPEP1/2) at position 356 to function as the acid/base catalyst and activate the nucleophilic water/hydroxide. Does not hydrolyze leukotriene D4 (LTD4) into leukotriene E4 (LTE4). Does not hydrolyze the beta-lactam antibiotic imipenem. The chain is Dipeptidase 3 (Dpep3) from Mus musculus (Mouse).